Consider the following 89-residue polypeptide: Small ribosomal subunit protein bS16 (89 aa).

Belongs to the bacterial ribosomal protein bS16 family.

The protein is Small ribosomal subunit protein bS16 of Gloeobacter violaceus (strain ATCC 29082 / PCC 7421).